The chain runs to 330 residues: Protein pelota homolog (330 aa).

The protein belongs to the eukaryotic release factor 1 family. Pelota subfamily. Monomer. Requires a divalent metal cation as cofactor.

It is found in the cytoplasm. Its function is as follows. May function in recognizing stalled ribosomes, interact with stem-loop structures in stalled mRNA molecules, and effect endonucleolytic cleavage of the mRNA. May play a role in the release non-functional ribosomes and degradation of damaged mRNAs. Has endoribonuclease activity. The sequence is that of Protein pelota homolog from Pyrobaculum neutrophilum (strain DSM 2338 / JCM 9278 / NBRC 100436 / V24Sta) (Thermoproteus neutrophilus).